A 227-amino-acid chain; its full sequence is Phosphatidylserine decarboxylase proenzyme (227 aa).

The Schiff-base intermediate with substrate; via pyruvic acid role is filled by Ser-184. Residue Ser-184 is modified to Pyruvic acid (Ser); by autocatalysis.

It belongs to the phosphatidylserine decarboxylase family. PSD-A subfamily. In terms of assembly, heterodimer of a large membrane-associated beta subunit and a small pyruvoyl-containing alpha subunit. Pyruvate serves as cofactor. Is synthesized initially as an inactive proenzyme. Formation of the active enzyme involves a self-maturation process in which the active site pyruvoyl group is generated from an internal serine residue via an autocatalytic post-translational modification. Two non-identical subunits are generated from the proenzyme in this reaction, and the pyruvate is formed at the N-terminus of the alpha chain, which is derived from the carboxyl end of the proenzyme. The post-translation cleavage follows an unusual pathway, termed non-hydrolytic serinolysis, in which the side chain hydroxyl group of the serine supplies its oxygen atom to form the C-terminus of the beta chain, while the remainder of the serine residue undergoes an oxidative deamination to produce ammonia and the pyruvoyl prosthetic group on the alpha chain.

The protein localises to the cell membrane. It catalyses the reaction a 1,2-diacyl-sn-glycero-3-phospho-L-serine + H(+) = a 1,2-diacyl-sn-glycero-3-phosphoethanolamine + CO2. The protein operates within phospholipid metabolism; phosphatidylethanolamine biosynthesis; phosphatidylethanolamine from CDP-diacylglycerol: step 2/2. Its function is as follows. Catalyzes the formation of phosphatidylethanolamine (PtdEtn) from phosphatidylserine (PtdSer). The sequence is that of Phosphatidylserine decarboxylase proenzyme from Ehrlichia ruminantium (strain Welgevonden).